Reading from the N-terminus, the 185-residue chain is Crossover junction endodeoxyribonuclease RuvC (185 aa).

Catalysis depends on residues Asp-7, Glu-66, and Asp-137. Residues Asp-7, Glu-66, and Asp-137 each contribute to the Mg(2+) site.

Belongs to the RuvC family. In terms of assembly, homodimer which binds Holliday junction (HJ) DNA. The HJ becomes 2-fold symmetrical on binding to RuvC with unstacked arms; it has a different conformation from HJ DNA in complex with RuvA. In the full resolvosome a probable DNA-RuvA(4)-RuvB(12)-RuvC(2) complex forms which resolves the HJ. The cofactor is Mg(2+).

The protein resides in the cytoplasm. It catalyses the reaction Endonucleolytic cleavage at a junction such as a reciprocal single-stranded crossover between two homologous DNA duplexes (Holliday junction).. Its function is as follows. The RuvA-RuvB-RuvC complex processes Holliday junction (HJ) DNA during genetic recombination and DNA repair. Endonuclease that resolves HJ intermediates. Cleaves cruciform DNA by making single-stranded nicks across the HJ at symmetrical positions within the homologous arms, yielding a 5'-phosphate and a 3'-hydroxyl group; requires a central core of homology in the junction. The consensus cleavage sequence is 5'-(A/T)TT(C/G)-3'. Cleavage occurs on the 3'-side of the TT dinucleotide at the point of strand exchange. HJ branch migration catalyzed by RuvA-RuvB allows RuvC to scan DNA until it finds its consensus sequence, where it cleaves and resolves the cruciform DNA. This is Crossover junction endodeoxyribonuclease RuvC from Anaeromyxobacter sp. (strain K).